The chain runs to 514 residues: 2-isopropylmalate synthase (514 aa).

Residues 5-268 (LIIFDTTLRD…DVGLDTTQIV (264 aa)) form the Pyruvate carboxyltransferase domain. Residues Asp-14, His-202, His-204, and Asn-239 each contribute to the Mn(2+) site. Residues 395–514 (KFVSLSQRSE…KDDKLNPQRS (120 aa)) are regulatory domain.

This sequence belongs to the alpha-IPM synthase/homocitrate synthase family. LeuA type 1 subfamily. Homodimer. Mn(2+) serves as cofactor.

The protein resides in the cytoplasm. It catalyses the reaction 3-methyl-2-oxobutanoate + acetyl-CoA + H2O = (2S)-2-isopropylmalate + CoA + H(+). The protein operates within amino-acid biosynthesis; L-leucine biosynthesis; L-leucine from 3-methyl-2-oxobutanoate: step 1/4. In terms of biological role, catalyzes the condensation of the acetyl group of acetyl-CoA with 3-methyl-2-oxobutanoate (2-ketoisovalerate) to form 3-carboxy-3-hydroxy-4-methylpentanoate (2-isopropylmalate). This is 2-isopropylmalate synthase from Burkholderia ambifaria (strain ATCC BAA-244 / DSM 16087 / CCUG 44356 / LMG 19182 / AMMD) (Burkholderia cepacia (strain AMMD)).